Consider the following 278-residue polypeptide: Sulfur carrier protein FdhD (278 aa).

The active-site Cysteine persulfide intermediate is Cys-121. 260 to 265 (FCKPGR) lines the Mo-bis(molybdopterin guanine dinucleotide) pocket.

It belongs to the FdhD family.

It is found in the cytoplasm. In terms of biological role, required for formate dehydrogenase (FDH) activity. Acts as a sulfur carrier protein that transfers sulfur from IscS to the molybdenum cofactor prior to its insertion into FDH. The protein is Sulfur carrier protein FdhD of Salmonella paratyphi A (strain ATCC 9150 / SARB42).